Reading from the N-terminus, the 618-residue chain is 1-deoxy-D-xylulose-5-phosphate synthase (618 aa).

Thiamine diphosphate-binding positions include histidine 70 and 111-113 (GHS). Position 142 (aspartate 142) interacts with Mg(2+). Residues 143 to 144 (GS), asparagine 171, tyrosine 278, and glutamate 360 contribute to the thiamine diphosphate site. Asparagine 171 is a binding site for Mg(2+).

The protein belongs to the transketolase family. DXPS subfamily. As to quaternary structure, homodimer. Requires Mg(2+) as cofactor. Thiamine diphosphate serves as cofactor.

The catalysed reaction is D-glyceraldehyde 3-phosphate + pyruvate + H(+) = 1-deoxy-D-xylulose 5-phosphate + CO2. Its pathway is metabolic intermediate biosynthesis; 1-deoxy-D-xylulose 5-phosphate biosynthesis; 1-deoxy-D-xylulose 5-phosphate from D-glyceraldehyde 3-phosphate and pyruvate: step 1/1. Catalyzes the acyloin condensation reaction between C atoms 2 and 3 of pyruvate and glyceraldehyde 3-phosphate to yield 1-deoxy-D-xylulose-5-phosphate (DXP). The polypeptide is 1-deoxy-D-xylulose-5-phosphate synthase (Helicobacter pylori (strain HPAG1)).